The primary structure comprises 207 residues: 8-oxoguanine DNA glycosylase/AP lyase (207 aa).

Catalysis depends on residues lysine 128 and aspartate 146.

It belongs to the type-2 OGG1 family.

It catalyses the reaction 2'-deoxyribonucleotide-(2'-deoxyribose 5'-phosphate)-2'-deoxyribonucleotide-DNA = a 3'-end 2'-deoxyribonucleotide-(2,3-dehydro-2,3-deoxyribose 5'-phosphate)-DNA + a 5'-end 5'-phospho-2'-deoxyribonucleoside-DNA + H(+). In terms of biological role, catalyzes the excision of an oxidatively damaged form of guanine (7,8-dihydro-8-oxoguanine = 8-oxoG) from DNA. Also cleaves the DNA backbone at apurinic/apyrimidinic sites (AP sites). This is 8-oxoguanine DNA glycosylase/AP lyase from Saccharolobus islandicus (strain Y.N.15.51 / Yellowstone #2) (Sulfolobus islandicus).